The following is a 149-amino-acid chain: Large ribosomal subunit protein bL9 (149 aa).

It belongs to the bacterial ribosomal protein bL9 family.

Binds to the 23S rRNA. The polypeptide is Large ribosomal subunit protein bL9 (Synechococcus sp. (strain JA-2-3B'a(2-13)) (Cyanobacteria bacterium Yellowstone B-Prime)).